The primary structure comprises 660 residues: Bifunctional polymyxin resistance protein ArnA (660 aa).

A formyltransferase ArnAFT region spans residues 1 to 304; it reads MKTVVFAYHD…TLGLVQGSRL (304 aa). Residue 86–88 coordinates (6R)-10-formyltetrahydrofolate; that stretch reads HLI. His-104 (proton donor; for formyltransferase activity) is an active-site residue. (6R)-10-formyltetrahydrofolate contacts are provided by residues Arg-114 and 136-140; that span reads VKRAD. The tract at residues 314–660 is dehydrogenase ArnADH; the sequence is RRTRVLILGV…RTVDLTDKPL (347 aa). NAD(+) contacts are provided by residues Asp-347 and 368–369; that span reads DI. UDP-alpha-D-glucuronate is bound by residues Ala-393, Tyr-398, and 432–433; that span reads TS. Glu-434 (proton acceptor; for decarboxylase activity) is an active-site residue. UDP-alpha-D-glucuronate-binding positions include Arg-460, Asn-492, 526–535, and Tyr-613; that span reads KLIDGGKQKR. Arg-619 acts as the Proton donor; for decarboxylase activity in catalysis.

In the N-terminal section; belongs to the Fmt family. UDP-L-Ara4N formyltransferase subfamily. This sequence in the C-terminal section; belongs to the NAD(P)-dependent epimerase/dehydratase family. UDP-glucuronic acid decarboxylase subfamily. As to quaternary structure, homohexamer, formed by a dimer of trimers.

It catalyses the reaction UDP-alpha-D-glucuronate + NAD(+) = UDP-beta-L-threo-pentopyranos-4-ulose + CO2 + NADH. The enzyme catalyses UDP-4-amino-4-deoxy-beta-L-arabinose + (6R)-10-formyltetrahydrofolate = UDP-4-deoxy-4-formamido-beta-L-arabinose + (6S)-5,6,7,8-tetrahydrofolate + H(+). It participates in nucleotide-sugar biosynthesis; UDP-4-deoxy-4-formamido-beta-L-arabinose biosynthesis; UDP-4-deoxy-4-formamido-beta-L-arabinose from UDP-alpha-D-glucuronate: step 1/3. The protein operates within nucleotide-sugar biosynthesis; UDP-4-deoxy-4-formamido-beta-L-arabinose biosynthesis; UDP-4-deoxy-4-formamido-beta-L-arabinose from UDP-alpha-D-glucuronate: step 3/3. It functions in the pathway bacterial outer membrane biogenesis; lipopolysaccharide biosynthesis. Bifunctional enzyme that catalyzes the oxidative decarboxylation of UDP-glucuronic acid (UDP-GlcUA) to UDP-4-keto-arabinose (UDP-Ara4O) and the addition of a formyl group to UDP-4-amino-4-deoxy-L-arabinose (UDP-L-Ara4N) to form UDP-L-4-formamido-arabinose (UDP-L-Ara4FN). The modified arabinose is attached to lipid A and is required for resistance to polymyxin and cationic antimicrobial peptides. The sequence is that of Bifunctional polymyxin resistance protein ArnA from Escherichia coli O6:K15:H31 (strain 536 / UPEC).